Consider the following 83-residue polypeptide: Molybdopterin synthase sulfur carrier subunit (83 aa).

Glycine 83 is modified (1-thioglycine; alternate). Glycine 83 bears the Glycyl adenylate; alternate mark.

This sequence belongs to the MoaD family. MOCS2A subfamily. Heterotetramer; composed of 2 small (MOCS2A) and 2 large (MOCS2B) subunits. C-terminal thiocarboxylation occurs in 2 steps, it is first acyl-adenylated (-COAMP) via the hesA/moeB/thiF part of MOCS3, then thiocarboxylated (-COSH) via the rhodanese domain of MOCS3.

It is found in the cytoplasm. It functions in the pathway cofactor biosynthesis; molybdopterin biosynthesis. Functionally, acts as a sulfur carrier required for molybdopterin biosynthesis. Component of the molybdopterin synthase complex that catalyzes the conversion of precursor Z into molybdopterin by mediating the incorporation of 2 sulfur atoms into precursor Z to generate a dithiolene group. In the complex, serves as sulfur donor by being thiocarboxylated (-COSH) at its C-terminus by MOCS3. After interaction with MOCS2B, the sulfur is then transferred to precursor Z to form molybdopterin. The chain is Molybdopterin synthase sulfur carrier subunit from Chlamydomonas reinhardtii (Chlamydomonas smithii).